The following is a 715-amino-acid chain: Polyribonucleotide nucleotidyltransferase (715 aa).

Aspartate 488 and aspartate 494 together coordinate Mg(2+). Positions 555-614 (PRIEVMHIPTDKIRDVIGSGGKVIREIVEKTGAKINIEDDGTVKIASSNAKEIEAAKKWI) constitute a KH domain. Positions 624–692 (GEIYEGTVVK…ERGKVRLSMK (69 aa)) constitute an S1 motif domain.

This sequence belongs to the polyribonucleotide nucleotidyltransferase family. It depends on Mg(2+) as a cofactor.

The protein resides in the cytoplasm. The enzyme catalyses RNA(n+1) + phosphate = RNA(n) + a ribonucleoside 5'-diphosphate. Involved in mRNA degradation. Catalyzes the phosphorolysis of single-stranded polyribonucleotides processively in the 3'- to 5'-direction. The protein is Polyribonucleotide nucleotidyltransferase of Mesorhizobium japonicum (strain LMG 29417 / CECT 9101 / MAFF 303099) (Mesorhizobium loti (strain MAFF 303099)).